The primary structure comprises 715 residues: Targeting protein for Xklp2-B (715 aa).

The segment at 36–167 (NAENIPPDQK…LTMPATPTVL (132 aa)) is disordered. Residues 47–56 (LSETSVNAEQ) are compositionally biased toward polar residues. The span at 85-103 (QTKRSARRMSKKHRQKILL) shows a compositional bias: basic residues. A compositionally biased stretch (basic and acidic residues) spans 104–115 (KMKETHLEKETA). Residues 141 to 152 (QPTSSHHGTTSP) are compositionally biased toward polar residues. S204 is subject to Phosphoserine; by plk1. Disordered regions lie at residues 260 to 291 (PPTSPVQVTKGGHTVPKPFNLSKGKRKHEEAS) and 314 to 337 (RSRQKEMEGPSPVKMLKPKLTNPK).

It belongs to the TPX2 family. In terms of assembly, associates with microtubules. Interacts with aurka and plk1. Interacts with kif15. Phosphorylated during mitosis. Hyperphosphorylated upon assembly of microtubules.

It localises to the nucleus. Its subcellular location is the cytoplasm. The protein localises to the cytoskeleton. It is found in the spindle. The protein resides in the spindle pole. In terms of biological role, spindle assembly factor. Required for normal assembly of mitotic spindles. Mediates the binding kif15 and aurka to spindle microtubules. Required for targeting kif15 to microtubule minus ends. Activates aurka by promoting its autophosphorylation and protects the phosphorylated residue against dephosphorylation. This Xenopus laevis (African clawed frog) protein is Targeting protein for Xklp2-B (tpx2-b).